Consider the following 24-residue polypeptide: Attacin (24 aa).

Belongs to the attacin/sarcotoxin-2 family.

The protein localises to the secreted. Hemolymph antibacterial protein. In Heliothis virescens (Tobacco budworm moth), this protein is Attacin.